The primary structure comprises 175 residues: Peptide deformylase (175 aa).

Residues C98 and H140 each contribute to the Fe cation site. The active site involves E141. Position 144 (H144) interacts with Fe cation.

It belongs to the polypeptide deformylase family. Fe(2+) serves as cofactor.

It catalyses the reaction N-terminal N-formyl-L-methionyl-[peptide] + H2O = N-terminal L-methionyl-[peptide] + formate. Functionally, removes the formyl group from the N-terminal Met of newly synthesized proteins. Requires at least a dipeptide for an efficient rate of reaction. N-terminal L-methionine is a prerequisite for activity but the enzyme has broad specificity at other positions. This chain is Peptide deformylase, found in Bradyrhizobium sp. (strain BTAi1 / ATCC BAA-1182).